We begin with the raw amino-acid sequence, 241 residues long: MSDSRPSGRQPDQLRPVVIQRGFTRHAEGSVLVCFGETRVLCTASVENRVPGFLRGKGEGWVTAEYGMLPRATHTRSDREAARGKQGGRTLEIQRLIGRSLRACVDRNALGERTITLDCDVLQADGGTRTAAITGAYVALVDAVNVLMKRGDIKRNPILGAVAAVSVGVYRGTPVLDLDYAEDSDCDTDMNVVMNDGGGFIELQGTAEGHAFRRDELDALLGLAEKGVGELLAAQQAALSA.

Phosphate-binding positions include R89 and 127–129 (GTR).

The protein belongs to the RNase PH family. In terms of assembly, homohexameric ring arranged as a trimer of dimers.

The enzyme catalyses tRNA(n+1) + phosphate = tRNA(n) + a ribonucleoside 5'-diphosphate. Functionally, phosphorolytic 3'-5' exoribonuclease that plays an important role in tRNA 3'-end maturation. Removes nucleotide residues following the 3'-CCA terminus of tRNAs; can also add nucleotides to the ends of RNA molecules by using nucleoside diphosphates as substrates, but this may not be physiologically important. Probably plays a role in initiation of 16S rRNA degradation (leading to ribosome degradation) during starvation. This is Ribonuclease PH from Stenotrophomonas maltophilia (strain K279a).